We begin with the raw amino-acid sequence, 150 residues long: Phosphoribosyl-AMP cyclohydrolase (150 aa).

D93 serves as a coordination point for Mg(2+). Zn(2+) is bound at residue C94. Positions 95 and 97 each coordinate Mg(2+). Residues C112 and C119 each contribute to the Zn(2+) site.

This sequence belongs to the PRA-CH family. Homodimer. The cofactor is Mg(2+). Zn(2+) is required as a cofactor.

It localises to the cytoplasm. It carries out the reaction 1-(5-phospho-beta-D-ribosyl)-5'-AMP + H2O = 1-(5-phospho-beta-D-ribosyl)-5-[(5-phospho-beta-D-ribosylamino)methylideneamino]imidazole-4-carboxamide. It functions in the pathway amino-acid biosynthesis; L-histidine biosynthesis; L-histidine from 5-phospho-alpha-D-ribose 1-diphosphate: step 3/9. In terms of biological role, catalyzes the hydrolysis of the adenine ring of phosphoribosyl-AMP. This chain is Phosphoribosyl-AMP cyclohydrolase, found in Rhizobium leguminosarum bv. trifolii (strain WSM2304).